A 154-amino-acid chain; its full sequence is Large ribosomal subunit protein uL13 (154 aa).

The tract at residues 131–154 (DHKHEAQQPEVVDFKSMNSKNTRG) is disordered.

Belongs to the universal ribosomal protein uL13 family. In terms of assembly, part of the 50S ribosomal subunit.

Functionally, this protein is one of the early assembly proteins of the 50S ribosomal subunit, although it is not seen to bind rRNA by itself. It is important during the early stages of 50S assembly. The chain is Large ribosomal subunit protein uL13 from Maricaulis maris (strain MCS10) (Caulobacter maris).